The primary structure comprises 177 residues: Probable nicotinate-nucleotide adenylyltransferase (177 aa).

It belongs to the NadD family.

It carries out the reaction nicotinate beta-D-ribonucleotide + ATP + H(+) = deamido-NAD(+) + diphosphate. The protein operates within cofactor biosynthesis; NAD(+) biosynthesis; deamido-NAD(+) from nicotinate D-ribonucleotide: step 1/1. Its function is as follows. Catalyzes the reversible adenylation of nicotinate mononucleotide (NaMN) to nicotinic acid adenine dinucleotide (NaAD). This chain is Probable nicotinate-nucleotide adenylyltransferase, found in Nitratiruptor sp. (strain SB155-2).